The primary structure comprises 526 residues: Phosphoenolpyruvate carboxylase (526 aa).

It belongs to the PEPCase type 2 family. In terms of assembly, homotetramer. Mg(2+) serves as cofactor.

The catalysed reaction is oxaloacetate + phosphate = phosphoenolpyruvate + hydrogencarbonate. Functionally, catalyzes the irreversible beta-carboxylation of phosphoenolpyruvate (PEP) to form oxaloacetate (OAA), a four-carbon dicarboxylic acid source for the tricarboxylic acid cycle. The polypeptide is Phosphoenolpyruvate carboxylase (Methanosarcina barkeri (strain Fusaro / DSM 804)).